The following is a 255-amino-acid chain: Type III pantothenate kinase (255 aa).

6-13 provides a ligand contact to ATP; that stretch reads DVGNTNTV. 108 to 111 contacts substrate; it reads GADR. Aspartate 110 functions as the Proton acceptor in the catalytic mechanism. Position 130 (aspartate 130) interacts with K(+). ATP is bound at residue threonine 133. Threonine 185 provides a ligand contact to substrate.

The protein belongs to the type III pantothenate kinase family. Homodimer. Requires NH4(+) as cofactor. The cofactor is K(+).

It is found in the cytoplasm. It carries out the reaction (R)-pantothenate + ATP = (R)-4'-phosphopantothenate + ADP + H(+). The protein operates within cofactor biosynthesis; coenzyme A biosynthesis; CoA from (R)-pantothenate: step 1/5. Its function is as follows. Catalyzes the phosphorylation of pantothenate (Pan), the first step in CoA biosynthesis. This chain is Type III pantothenate kinase, found in Hyphomonas neptunium (strain ATCC 15444).